We begin with the raw amino-acid sequence, 434 residues long: ATP-dependent protease ATPase subunit HslU (434 aa).

Residues Ile-18, 60-65, Asp-247, Glu-312, and Arg-384 contribute to the ATP site; that span reads GVGKTE.

Belongs to the ClpX chaperone family. HslU subfamily. As to quaternary structure, a double ring-shaped homohexamer of HslV is capped on each side by a ring-shaped HslU homohexamer. The assembly of the HslU/HslV complex is dependent on binding of ATP.

The protein localises to the cytoplasm. Its function is as follows. ATPase subunit of a proteasome-like degradation complex; this subunit has chaperone activity. The binding of ATP and its subsequent hydrolysis by HslU are essential for unfolding of protein substrates subsequently hydrolyzed by HslV. HslU recognizes the N-terminal part of its protein substrates and unfolds these before they are guided to HslV for hydrolysis. The sequence is that of ATP-dependent protease ATPase subunit HslU from Brucella ovis (strain ATCC 25840 / 63/290 / NCTC 10512).